The following is a 297-amino-acid chain: E3 ubiquitin-protein ligase TRIM52 (297 aa).

Residues 20–62 (CAICLDYFKDPVSISCGHNFCRGCVTQLWSKEDEEDQNEEEDE) form an RING-type; degenerate zinc finger. The segment at 72 to 167 (VGAMDGWDGS…DEDEDEELYP (96 aa)) is important for rapid proteolytic degradation by the proteasome. Residues 222 to 263 (NDQGMCFKHQEALKLFCEVDKEAICVVCRESRSHKQHSVLPL) form a B box-type zinc finger. Residues Cys227, His230, Cys249, and His255 each coordinate Zn(2+).

Belongs to the TRIM/RBCC family. (Microbial infection) Interacts with Japanese encephalitis virus non-structural protein 2 (NS2A); mediates the ubiquitination of NS2A, targeting it for proteasome-mediated degradation. Post-translationally, autoubiquitinated. Polyubiquitinated. Undergoes extremely rapid proteolytic degradation by the proteasome.

It is found in the cytoplasm. The protein localises to the cytosol. Its subcellular location is the nucleus. The catalysed reaction is S-ubiquitinyl-[E2 ubiquitin-conjugating enzyme]-L-cysteine + [acceptor protein]-L-lysine = [E2 ubiquitin-conjugating enzyme]-L-cysteine + N(6)-ubiquitinyl-[acceptor protein]-L-lysine.. It functions in the pathway protein modification; protein ubiquitination. E3 ubiquitin-protein ligase. Positively regulates the NF-kappa-B signaling pathway. Its function is as follows. (Microbial infection) Exhibits antiviral activity against Japanese encephalitis virus (JEV). Ubiquitinates the viral non-structural protein 2 (NS2A) and targets it for proteasome-mediated degradation. The sequence is that of E3 ubiquitin-protein ligase TRIM52 (TRIM52) from Homo sapiens (Human).